Reading from the N-terminus, the 156-residue chain is Snaclec alboaggregin-B subunit alpha (156 aa).

The signal sequence occupies residues 1–23; that stretch reads MGRFIFVSFGLLVVFLSLSGTGA. The C-type lectin domain maps to 24–151; that stretch reads DCPSDWSSFK…CEQKHIFMCK (128 aa). 3 disulfides stabilise this stretch: cysteine 25-cysteine 36, cysteine 53-cysteine 150, and cysteine 125-cysteine 142.

Belongs to the snaclec family. Heterodimer of subunits alpha and beta; disulfide-linked. As to expression, expressed by the venom gland.

The protein resides in the secreted. Functionally, weakly agglutinates platelets at high doses by binding to GPIbalpha (GP1BA). This Trimeresurus albolabris (White-lipped pit viper) protein is Snaclec alboaggregin-B subunit alpha.